The primary structure comprises 88 residues: Small ribosomal subunit protein uS15c (88 aa).

Belongs to the universal ribosomal protein uS15 family. In terms of assembly, part of the 30S ribosomal subunit.

Its subcellular location is the plastid. It is found in the chloroplast. This chain is Small ribosomal subunit protein uS15c (rps15), found in Pinus thunbergii (Japanese black pine).